The following is a 252-amino-acid chain: Petrobactin import ATP-binding protein YclP (252 aa).

The ABC transporter domain maps to 2 to 236 (VEVRNVSKQY…SVLEEIYDMT (235 aa)). 34–41 (GPNGAGKS) provides a ligand contact to ATP.

Belongs to the ABC transporter superfamily. As to quaternary structure, the complex is composed of two ATP-binding proteins (YclP), two transmembrane proteins (YclN and YclO) and a solute-binding protein (YclQ).

It localises to the cell membrane. It carries out the reaction a Fe(III)-siderophore(out) + ATP + H2O = a Fe(III)-siderophore(in) + ADP + phosphate + H(+). Part of the ABC transporter complex YclNOPQ involved in uptake of ferric-petrobactin. Petrobactin is a photoreactive 3,4-catecholate siderophore produced by many members of the B.cereus group, including B.anthracis. Probably responsible for energy coupling to the transport system. The sequence is that of Petrobactin import ATP-binding protein YclP (yclP) from Bacillus subtilis (strain 168).